Consider the following 795-residue polypeptide: RAS guanyl-releasing protein 1 (795 aa).

A compositionally biased stretch (basic and acidic residues) spans 1-12 (MGTLGKAREAPR). Positions 1 to 37 (MGTLGKAREAPRKPCHGSRAGPKARLEAKSTNSPLPA) are disordered. One can recognise an N-terminal Ras-GEF domain in the interval 53–176 (LGHLAKGASL…HLIDTTQINS (124 aa)). A ras exchanger motif region; required for transforming activity region spans residues 57–110 (AKGASLDDLIDSCIQSFDADGNLCRNNQLLQVMLTMHRIIISSAELLQKVMNLY). T184 carries the phosphothreonine; by PKC modification. A Ras-GEF domain is found at 205-436 (EPEELSEHLT…YELSYAREPR (232 aa)). 2 consecutive EF-hand domains span residues 470–505 (HVQRMVDSVFKNYDLDQDGYISQEEFEKIAASFPFS) and 506–532 (FCVMDKDREGLISRDEITAYFMRASSI). Residues D483, D485, D487, Y489, and E494 each coordinate Ca(2+). A Phorbol-ester/DAG-type zinc finger spans residues 541–591 (PHNFQETTYLKPTFCDNCAGFLWGVIKQGYRCKDCGMNCHKQCKDLVVFEC). S597 is subject to Phosphoserine. A suppress the PT region-mediated translocation to plasma membrane region spans residues 686–694 (TPGHFVLSS). A PT region; mediates the BCR-dependent translocation to plasma membrane region spans residues 717 to 795 (LVRKRAFVKW…LAQMDHGDSA (79 aa)). The stretch at 738-779 (ELHLRLRTYQELEQEINTLKADNDALKIQLKYAQKKIESLQL) forms a coiled coil.

Belongs to the RASGRP family. As to quaternary structure, homodimer. Forms a signaling complex with DGKZ and HRAS. Interacts with F-actin. Interacts with SKAP1. In terms of tissue distribution, detected in spleen and thymus. Expressed by mature thymocytes and to a lower extent by bone marrow-derived mast cells (at protein level). Detected in B-cells and keratinocytes (at protein level).

It localises to the cytoplasm. It is found in the cytosol. The protein localises to the cell membrane. Its subcellular location is the golgi apparatus membrane. The protein resides in the endoplasmic reticulum membrane. With respect to regulation, autoinhibited. Activated by diacylglycerol and calcium binding, which induces a conformational change releasing the autoinhibitory state. Regulated by DGKA. Regulated by DGKZ. Regulated by PLC gamma and F-actin polymerization. Its function is as follows. Functions as a calcium- and diacylglycerol (DAG)-regulated nucleotide exchange factor specifically activating Ras through the exchange of bound GDP for GTP. Activates the Erk/MAP kinase cascade. Regulates T-cell/B-cell development, homeostasis and differentiation by coupling T-lymphocyte/B-lymphocyte antigen receptors to Ras. Regulates NK cell cytotoxicity and ITAM-dependent cytokine production by activation of Ras-mediated ERK and JNK pathways. Functions in mast cell degranulation and cytokine secretion, regulating FcERI-evoked allergic responses. May also function in differentiation of other cell types. Proto-oncogene, which promotes T-cell lymphomagenesis when its expression is deregulated. The chain is RAS guanyl-releasing protein 1 (Rasgrp1) from Mus musculus (Mouse).